The chain runs to 661 residues: Ubiquitin carboxyl-terminal hydrolase 25 (661 aa).

A USP domain is found at 24 to 335 (LGLRNLGNTC…KAYILFFSRS (312 aa)). The Nucleophile role is filled by Cys33. The Proton acceptor role is filled by His294. 2 disordered regions span residues 387–406 (GNLASSKPHKFIRPKPRAEQ) and 449–558 (FHQD…LCSS). The segment covering 449-461 (FHQDENIAPKANK) has biased composition (basic and acidic residues). Polar residues-rich tracts occupy residues 462–475 (ENSVSVLPTKVNSG) and 545–558 (NGVSTTQSKGLCSS).

It belongs to the peptidase C19 family.

It carries out the reaction Thiol-dependent hydrolysis of ester, thioester, amide, peptide and isopeptide bonds formed by the C-terminal Gly of ubiquitin (a 76-residue protein attached to proteins as an intracellular targeting signal).. In terms of biological role, recognizes and hydrolyzes the peptide bond at the C-terminal Gly of ubiquitin. Involved in the processing of poly-ubiquitin precursors as well as that of ubiquitinated proteins. The polypeptide is Ubiquitin carboxyl-terminal hydrolase 25 (UBP25) (Arabidopsis thaliana (Mouse-ear cress)).